The primary structure comprises 233 residues: MSVHIEAKQGEIAETILLPGDPLRAKYIAETFLEDVVLFNQVRGMLGFTGTYKGEKVSVMGTGMGIPSISIYVNELIQSYDVKNLIRVGTMGGIQADVKVRDVVIAQAASTDSQINRNTFAGVDFAPVADFSLLKKAYDAGVEKGLSLKVGNVFSADRFYNDQLDKQQLADYGVLGIEMEAAALYTLAQKYGRRALAILTVSDHIFTGEETSAEERQTTFNDMIVVALEAAIK.

His4 provides a ligand contact to a purine D-ribonucleoside. Residues Gly20, Arg24, Arg43, and 87-90 (RVGT) contribute to the phosphate site. A purine D-ribonucleoside contacts are provided by residues 178-180 (EME) and 202-203 (SD). Asp203 acts as the Proton donor in catalysis.

Belongs to the PNP/UDP phosphorylase family. As to quaternary structure, homohexamer; trimer of homodimers.

The catalysed reaction is a purine D-ribonucleoside + phosphate = a purine nucleobase + alpha-D-ribose 1-phosphate. It carries out the reaction a purine 2'-deoxy-D-ribonucleoside + phosphate = a purine nucleobase + 2-deoxy-alpha-D-ribose 1-phosphate. Functionally, catalyzes the reversible phosphorolytic breakdown of the N-glycosidic bond in the beta-(deoxy)ribonucleoside molecules, with the formation of the corresponding free purine bases and pentose-1-phosphate. This chain is Purine nucleoside phosphorylase DeoD-type, found in Listeria innocua serovar 6a (strain ATCC BAA-680 / CLIP 11262).